A 397-amino-acid polypeptide reads, in one-letter code: 3-ketoacyl-CoA thiolase, mitochondrial (397 aa).

A mitochondrion; not cleaved-targeting transit peptide spans 1–16; the sequence is MALLRGVFVVAAKRTP. Residue Lys-25 is modified to N6-acetyllysine; alternate. Lys-25 carries the post-translational modification N6-succinyllysine; alternate. Lys-45 carries the post-translational modification N6-succinyllysine. The Acyl-thioester intermediate role is filled by Cys-92. Thr-119 carries the post-translational modification Phosphothreonine. Ser-121 carries the phosphoserine modification. Tyr-127 is subject to Phosphotyrosine. The residue at position 136 (Thr-136) is a Phosphothreonine. Lys-137 bears the N6-acetyllysine; alternate mark. N6-succinyllysine; alternate is present on Lys-137. The residue at position 140 (Ser-140) is a Phosphoserine. Lys-143, Lys-171, Lys-191, and Lys-209 each carry N6-acetyllysine; alternate. Lys-143, Lys-171, Lys-191, and Lys-209 each carry N6-succinyllysine; alternate. Lys-211, Lys-212, and Lys-214 each carry N6-succinyllysine. 2 residues coordinate CoA: Arg-224 and Thr-227. Lys-234 carries the N6-acetyllysine; alternate modification. The residue at position 234 (Lys-234) is an N6-succinyllysine; alternate. At Lys-240 the chain carries N6-succinyllysine. Position 241 is an N6-acetyllysine (Lys-241). Residue Ser-251 coordinates CoA. 2 positions are modified to N6-acetyllysine: Lys-269 and Lys-270. Lys-305 is modified (N6-acetyllysine; alternate). The residue at position 305 (Lys-305) is an N6-succinyllysine; alternate. Phosphoserine is present on Ser-310. Lys-312 carries the post-translational modification N6-acetyllysine; alternate. Lys-312 bears the N6-succinyllysine; alternate mark. Ser-333 carries the phosphoserine modification. N6-acetyllysine occurs at positions 340 and 375. Catalysis depends on Cys-382, which acts as the Proton donor/acceptor.

It belongs to the thiolase-like superfamily. Thiolase family. In terms of assembly, homotetramer. Interacts with BNIP3.

The protein localises to the mitochondrion. It carries out the reaction an acyl-CoA + acetyl-CoA = a 3-oxoacyl-CoA + CoA. It catalyses the reaction 2 acetyl-CoA = acetoacetyl-CoA + CoA. The catalysed reaction is acetyl-CoA + H2O = acetate + CoA + H(+). The enzyme catalyses propanoyl-CoA + H2O = propanoate + CoA + H(+). It carries out the reaction butanoyl-CoA + H2O = butanoate + CoA + H(+). It catalyses the reaction hexanoyl-CoA + H2O = hexanoate + CoA + H(+). The catalysed reaction is octanoyl-CoA + H2O = octanoate + CoA + H(+). The enzyme catalyses decanoyl-CoA + H2O = decanoate + CoA + H(+). It carries out the reaction dodecanoyl-CoA + H2O = dodecanoate + CoA + H(+). It catalyses the reaction tetradecanoyl-CoA + H2O = tetradecanoate + CoA + H(+). The catalysed reaction is hexadecanoyl-CoA + H2O = hexadecanoate + CoA + H(+). It participates in lipid metabolism; fatty acid beta-oxidation. In terms of biological role, in the production of energy from fats, this is one of the enzymes that catalyzes the last step of the mitochondrial beta-oxidation pathway, an aerobic process breaking down fatty acids into acetyl-CoA. Using free coenzyme A/CoA, catalyzes the thiolytic cleavage of medium- to long-chain unbranched 3-oxoacyl-CoAs into acetyl-CoA and a fatty acyl-CoA shortened by two carbon atoms. Also catalyzes the condensation of two acetyl-CoA molecules into acetoacetyl-CoA and could be involved in the production of ketone bodies. Also displays hydrolase activity on various fatty acyl-CoAs. Thereby, could be responsible for the production of acetate in a side reaction to beta-oxidation. Abolishes BNIP3-mediated apoptosis and mitochondrial damage. The polypeptide is 3-ketoacyl-CoA thiolase, mitochondrial (ACAA2) (Pongo abelii (Sumatran orangutan)).